Consider the following 870-residue polypeptide: Leucine--tRNA ligase (870 aa).

A 'HIGH' region motif is present at residues 42–52 (PYPSGKLHMGH). The 'KMSKS' region motif lies at 629-633 (KMSKS). K632 lines the ATP pocket.

It belongs to the class-I aminoacyl-tRNA synthetase family.

The protein localises to the cytoplasm. The enzyme catalyses tRNA(Leu) + L-leucine + ATP = L-leucyl-tRNA(Leu) + AMP + diphosphate. This Azotobacter vinelandii (strain DJ / ATCC BAA-1303) protein is Leucine--tRNA ligase.